The primary structure comprises 205 residues: Large ribosomal subunit protein bL25 (205 aa).

Residues 180 to 205 are disordered; it reads HEEVAEEAEETEGEDAEEAPAAEGEE. The segment covering 183–205 has biased composition (acidic residues); the sequence is VAEEAEETEGEDAEEAPAAEGEE.

This sequence belongs to the bacterial ribosomal protein bL25 family. CTC subfamily. As to quaternary structure, part of the 50S ribosomal subunit; part of the 5S rRNA/L5/L18/L25 subcomplex. Contacts the 5S rRNA. Binds to the 5S rRNA independently of L5 and L18.

Its function is as follows. This is one of the proteins that binds to the 5S RNA in the ribosome where it forms part of the central protuberance. This is Large ribosomal subunit protein bL25 from Corynebacterium diphtheriae (strain ATCC 700971 / NCTC 13129 / Biotype gravis).